The sequence spans 543 residues: Efflux pump mokI (543 aa).

The next 13 helical transmembrane spans lie at 30–50, 90–110, 125–145, 153–173, 185–205, 233–253, 261–281, 307–327, 340–360, 364–384, 394–416, 428–448, and 509–529; these read LVVT…SIIV, LLTL…GSAL, AVAG…LASA, LLIG…PLLG, CFYI…AIHI, LLGF…LEWG, SSVI…FGFW, LFLG…PIYF, VYML…GAII, GYYI…AGLV, AAWV…TPII, ALGI…FLTL, and VGAS…GLIW.

It belongs to the major facilitator superfamily. TCR/Tet family.

The protein localises to the membrane. Efflux pump; part of the gene cluster that mediates the biosynthesis of monakolin K, also known as lovastatin, and which acts as a potent competitive inhibitor of HMG-CoA reductase. The chain is Efflux pump mokI from Monascus pilosus (Red mold).